The sequence spans 590 residues: Glutamine--fructose-6-phosphate aminotransferase [isomerizing] (590 aa).

The active-site Nucleophile; for GATase activity is the cysteine 2. The Glutamine amidotransferase type-2 domain occupies 2-219; sequence CGIVACILKD…DGEMVILDGD (218 aa). 2 SIS domains span residues 277–415 and 438–580; these read VVEE…PELM and LAAT…PDKP. The For Fru-6P isomerization activity role is filled by lysine 585.

As to quaternary structure, homodimer.

It localises to the cytoplasm. The enzyme catalyses D-fructose 6-phosphate + L-glutamine = D-glucosamine 6-phosphate + L-glutamate. Its function is as follows. Catalyzes the first step in hexosamine metabolism, converting fructose-6P into glucosamine-6P using glutamine as a nitrogen source. The polypeptide is Glutamine--fructose-6-phosphate aminotransferase [isomerizing] (Methanothermobacter thermautotrophicus (strain ATCC 29096 / DSM 1053 / JCM 10044 / NBRC 100330 / Delta H) (Methanobacterium thermoautotrophicum)).